A 575-amino-acid polypeptide reads, in one-letter code: Jasmonoyl--L-amino acid synthetase JAR1 (575 aa).

Residues 10–30 (MNRVIDEFDEMTRNAHQVQKQ) adopt a coiled-coil conformation. Ser-98 contacts ATP. Ser-101 provides a ligand contact to jasmonate. Residues Met-118, Thr-121, Gly-163, Asn-168, and 331-336 (GSSEGW) contribute to the ATP site. 166-170 (TTNVY) is an an L-alpha-amino acid binding site. 328–331 (HDYG) lines the jasmonate pocket. 530–534 (KIQEH) serves as a coordination point for an L-alpha-amino acid. Position 557 (Lys-557) interacts with ATP.

The protein belongs to the IAA-amido conjugating enzyme family. As to quaternary structure, interacts with GSTU20/FIP1 under continuous far red (cFR) light; this binding increases its activity and determines the priority of substrate binding.

Its subcellular location is the cytoplasm. The enzyme catalyses a jasmonate + an L-alpha-amino acid + ATP = a jasmonyl-L-amino acid + AMP + diphosphate + H(+). It carries out the reaction (+)-7-isojasmonate + L-isoleucine + ATP = L-isoleucine-(+)-7-isojasmonate + AMP + diphosphate + H(+). Its activity is regulated as follows. Activated by GSTU20/FIP1. Functionally, catalyzes the synthesis of jasmonates-amino acid conjugates by adenylation; can use Ile and, in vitro at least, Val, Leu and Phe as conjugating amino acids on jasmonic acid (JA) and 9,10-dihydro-JA substrates, and to a lower extent, on 3-oxo-2-(2Z-pentenyl)-cyclopentane-1-butyric acid (OPC-4) and 12-hydroxy-JA (12-OH-JA). Can synthesize adenosine 5-tetraphosphate in vitro. Required for the JA-mediated signaling pathway that regulates many developmental and defense mechanisms, including growth root inhibition, vegetative storage proteins (VSPs) accumulation, induced systemic resistance (ISR), response to wounding and herbivores, tolerance to ozone O(3) (probably having a role in lesion containment). Plays an important role in the accumulation of JA-Ile in response to wounding, both locally and systemically; promotes JA responding genes especially in distal part of wounded plants, via the JA-Ile-stimulated degradation of JAZ repressor proteins by the SCF(COI)E3 ubiquitin-protein ligase pathway. Involved in the apoptosis-like programmed cell death (PCD) induced by fungal toxin fumonisin B1-mediated (FB1). Required for volatile compounds (C6-aldehydes and allo-ocimene)-mediated defense activation. Involved in the non-pathogenic rhizobacterium-mediated ISR (defense priming) by P.fluorescens (strains CHAOr and WCS417r) and P.putida LSW17S against infection leaf pathogens such as P.syringae pv. tomato and H.parasitica. Required for the JA-dependent resistance to fungi such as P.irregulare, U.vignae and U.appendiculatus. Necessary to induce systemic resistance against R.solanaceraum and P.syringae pv. tomato with P.oligandrum (a non-pathogenic biocontrol agent) cell wall protein fraction (CWP). Mediates PGIP2 accumulation in response to B.cinerea infection and thus contributes to resistance against this pathogen. Modulates the UV-B alteration of leaves attractiveness to diamondback moths P.xylostella leading to insect oviposition. Involved in the regulation of far-red light influence on development, being an actor of the interplay between light and JA signaling. Seems necessary for the salicylic acid (SA)-mediated, NPR1-independent resistance pathway. May contribute to the chitin-elicited pathway. Contributes to the sensitivity toward F.graminearum. The polypeptide is Jasmonoyl--L-amino acid synthetase JAR1 (Arabidopsis thaliana (Mouse-ear cress)).